The primary structure comprises 262 residues: Global transcriptional regulator CodY (262 aa).

Residues 1–159 form a GAF domain region; sequence MAHLLEKTRK…ASTVVGIQLL (159 aa). The H-T-H motif DNA-binding region spans 207 to 226; sequence ASVIADRIGITRSVIVNALR.

This sequence belongs to the CodY family.

The protein localises to the cytoplasm. DNA-binding global transcriptional regulator which is involved in the adaptive response to starvation and acts by directly or indirectly controlling the expression of numerous genes in response to nutrient availability. During rapid exponential growth, CodY is highly active and represses genes whose products allow adaptation to nutrient depletion. This is Global transcriptional regulator CodY from Streptococcus pneumoniae (strain JJA).